We begin with the raw amino-acid sequence, 363 residues long: UDP-N-acetylglucosamine--N-acetylmuramyl-(pentapeptide) pyrophosphoryl-undecaprenol N-acetylglucosamine transferase (363 aa).

UDP-N-acetyl-alpha-D-glucosamine is bound by residues 14–16 (TGG), Arg171, Ser200, and Gln290.

Belongs to the glycosyltransferase 28 family. MurG subfamily.

It localises to the cell inner membrane. It carries out the reaction di-trans,octa-cis-undecaprenyl diphospho-N-acetyl-alpha-D-muramoyl-L-alanyl-D-glutamyl-meso-2,6-diaminopimeloyl-D-alanyl-D-alanine + UDP-N-acetyl-alpha-D-glucosamine = di-trans,octa-cis-undecaprenyl diphospho-[N-acetyl-alpha-D-glucosaminyl-(1-&gt;4)]-N-acetyl-alpha-D-muramoyl-L-alanyl-D-glutamyl-meso-2,6-diaminopimeloyl-D-alanyl-D-alanine + UDP + H(+). It participates in cell wall biogenesis; peptidoglycan biosynthesis. Functionally, cell wall formation. Catalyzes the transfer of a GlcNAc subunit on undecaprenyl-pyrophosphoryl-MurNAc-pentapeptide (lipid intermediate I) to form undecaprenyl-pyrophosphoryl-MurNAc-(pentapeptide)GlcNAc (lipid intermediate II). This Borreliella afzelii (strain PKo) (Borrelia afzelii) protein is UDP-N-acetylglucosamine--N-acetylmuramyl-(pentapeptide) pyrophosphoryl-undecaprenol N-acetylglucosamine transferase.